Consider the following 108-residue polypeptide: Nucleoid-associated protein Avin_19840 (108 aa).

This sequence belongs to the YbaB/EbfC family. Homodimer.

Its subcellular location is the cytoplasm. The protein resides in the nucleoid. In terms of biological role, binds to DNA and alters its conformation. May be involved in regulation of gene expression, nucleoid organization and DNA protection. In Azotobacter vinelandii (strain DJ / ATCC BAA-1303), this protein is Nucleoid-associated protein Avin_19840.